A 244-amino-acid chain; its full sequence is Small ribosomal subunit protein uS3 (244 aa).

Residues 39-110 enclose the KH type-2 domain; it reads IRDYVRKNLS…QIRINVIEVE (72 aa). The tract at residues 215–244 is disordered; it reads EDAAPSNVGQPRRRNQQRRRQQFEDRSNEG. Over residues 225–234 the composition is skewed to basic residues; the sequence is PRRRNQQRRR. The span at 235 to 244 shows a compositional bias: basic and acidic residues; sequence QQFEDRSNEG.

This sequence belongs to the universal ribosomal protein uS3 family. In terms of assembly, part of the 30S ribosomal subunit. Forms a tight complex with proteins S10 and S14.

Functionally, binds the lower part of the 30S subunit head. Binds mRNA in the 70S ribosome, positioning it for translation. The chain is Small ribosomal subunit protein uS3 from Synechococcus sp. (strain ATCC 27144 / PCC 6301 / SAUG 1402/1) (Anacystis nidulans).